Consider the following 126-residue polypeptide: Small ribosomal subunit protein uS13 (126 aa).

The interval 93 to 126 is disordered; it reads RRGLPVRGQRTKTNARTRKGPKRTVAGKKKAGRK.

It belongs to the universal ribosomal protein uS13 family. Part of the 30S ribosomal subunit. Forms a loose heterodimer with protein S19. Forms two bridges to the 50S subunit in the 70S ribosome.

Its function is as follows. Located at the top of the head of the 30S subunit, it contacts several helices of the 16S rRNA. In the 70S ribosome it contacts the 23S rRNA (bridge B1a) and protein L5 of the 50S subunit (bridge B1b), connecting the 2 subunits; these bridges are implicated in subunit movement. Contacts the tRNAs in the A and P-sites. This is Small ribosomal subunit protein uS13 from Beutenbergia cavernae (strain ATCC BAA-8 / DSM 12333 / CCUG 43141 / JCM 11478 / NBRC 16432 / NCIMB 13614 / HKI 0122).